The sequence spans 1016 residues: Mastermind-like protein 1 (1016 aa).

The interval 1–123 is required for interaction with NOTCH proteins; sequence MVLPTCPMAE…NLDSATSPQN (123 aa). The residue at position 45 (Ser-45) is a Phosphoserine. Disordered stretches follow at residues 65-184, 263-487, 561-617, 658-681, and 796-953; these read QAKA…LGLD, PDED…PSHV, KPKP…SQQQ, EKQQ…QGSF, and AYGQ…GGRA. Residues 67–76 are compositionally biased toward basic residues; the sequence is KAKRAGKHRQ. Over residues 93–115 the composition is skewed to basic and acidic residues; the sequence is DAADGPEHGRPATHLHDTVKRNL. Residues 116-129 are compositionally biased toward polar residues; sequence DSATSPQNGDQQNG. Ser-120 is modified (phosphoserine). The span at 263–282 shows a compositional bias: basic and acidic residues; it reads PDEDMKDLFNEDFEEKKDPE. Polar residues predominate over residues 283–292; that stretch reads SSGSATQTPL. Phosphoserine occurs at positions 303 and 314. The span at 322-353 shows a compositional bias: polar residues; that stretch reads AGQTFLGPSSAPVSTDSPSLGGSQTLFHTSGQ. Ser-360 bears the Phosphoserine mark. Polar residues predominate over residues 392-403; that stretch reads ELSSAHQLQQIA. Positions 413–426 are enriched in low complexity; the sequence is QNPQQATPAPAPGQ. Composition is skewed to polar residues over residues 427-439, 451-463, 577-595, and 602-617; these read MSTW…SHSS, SPSS…TNSK, QEQN…SVGT, and VASS…SQQQ. Positions 801 to 810 are enriched in low complexity; sequence SLGSSGLSQQ. Lys-822 carries the N6-acetyllysine modification. A compositionally biased stretch (polar residues) spans 834 to 885; that stretch reads GQNSSWQHQGMPNLSGQTPGNSNVSPFTAASSFHMQQQAHLKMSSPQFSQAV. The residue at position 1015 (Ser-1015) is a Phosphoserine.

This sequence belongs to the mastermind family. In terms of assembly, interacts (via N-terminus) with NOTCH1, NOTCH2, NOTCH3 and NOTCH4 (via ankyrin repeat region). Interacts (via N-terminus) with p53 (via DNA-binding region). Forms a DNA-binding complex with Notch proteins and RBPSUH/RBP-J kappa/CBF1. Also binds CREBBP/CBP and CDK8. Forms a complex with PRAG1, NOTCH1 and MAML1, in a MAML1-dependent manner. As to expression, widely expressed with highest levels in heart, pancreas, peripheral blood leukocytes and spleen.

Its subcellular location is the nucleus speckle. Functionally, acts as a transcriptional coactivator for NOTCH proteins. Has been shown to amplify NOTCH-induced transcription of HES1. Enhances phosphorylation and proteolytic turnover of the NOTCH intracellular domain in the nucleus through interaction with CDK8. Binds to CREBBP/CBP which promotes nucleosome acetylation at NOTCH enhancers and activates transcription. Induces phosphorylation and localization of CREBBP to nuclear foci. Plays a role in hematopoietic development by regulating NOTCH-mediated lymphoid cell fate decisions. This Homo sapiens (Human) protein is Mastermind-like protein 1.